A 188-amino-acid polypeptide reads, in one-letter code: Elongation factor P-like protein (188 aa).

It belongs to the elongation factor P family.

This is Elongation factor P-like protein from Saccharophagus degradans (strain 2-40 / ATCC 43961 / DSM 17024).